Reading from the N-terminus, the 116-residue chain is U16-barytoxin-Tl1c (116 aa).

A signal peptide spans 1–20; sequence MKTIIVFLSLLVLATKFGDA. Residues 21-76 constitute a propeptide that is removed on maturation; that stretch reads NEGVNQEQMKEVIQNEFREDFLNEMAPMSLLQQLEAIESTLLEKEADRNSRQKRCN. Disulfide bonds link C75–C90, C82–C95, and C89–C110.

The protein belongs to the neurotoxin 14 (magi-1) family. 06 (ICK-Trit) subfamily. In terms of tissue distribution, expressed by the venom gland.

The protein resides in the secreted. Functionally, ion channel inhibitor. The chain is U16-barytoxin-Tl1c from Trittame loki (Brush-footed trapdoor spider).